A 701-amino-acid polypeptide reads, in one-letter code: Elongation factor G (701 aa).

One can recognise a tr-type G domain in the interval 6–286; that stretch reads KFTRNIGIAA…YVMELLPSPL (281 aa). Residues 15-22, 83-87, and 137-140 each bind GTP; these read AHIDAGKT, DTPGH, and NKMD.

The protein belongs to the TRAFAC class translation factor GTPase superfamily. Classic translation factor GTPase family. EF-G/EF-2 subfamily.

Its subcellular location is the cytoplasm. In terms of biological role, catalyzes the GTP-dependent ribosomal translocation step during translation elongation. During this step, the ribosome changes from the pre-translocational (PRE) to the post-translocational (POST) state as the newly formed A-site-bound peptidyl-tRNA and P-site-bound deacylated tRNA move to the P and E sites, respectively. Catalyzes the coordinated movement of the two tRNA molecules, the mRNA and conformational changes in the ribosome. The polypeptide is Elongation factor G (Cytophaga hutchinsonii (strain ATCC 33406 / DSM 1761 / CIP 103989 / NBRC 15051 / NCIMB 9469 / D465)).